Here is a 689-residue protein sequence, read N- to C-terminus: UvrABC system protein C (689 aa).

One can recognise a GIY-YIG domain in the interval 16-95 (TNPGVYRFRD…IKEFAPRFNI (80 aa)). In terms of domain architecture, UVR spans 208-243 (KPYIRELTRQMNEAAECMDFETAAARRDDVGALERV). The segment at 316-337 (LAPAASGRRRTARHGSEDVVGQ) is disordered.

This sequence belongs to the UvrC family. In terms of assembly, interacts with UvrB in an incision complex.

The protein resides in the cytoplasm. Functionally, the UvrABC repair system catalyzes the recognition and processing of DNA lesions. UvrC both incises the 5' and 3' sides of the lesion. The N-terminal half is responsible for the 3' incision and the C-terminal half is responsible for the 5' incision. In Kocuria rhizophila (strain ATCC 9341 / DSM 348 / NBRC 103217 / DC2201), this protein is UvrABC system protein C.